Consider the following 340-residue polypeptide: Ketol-acid reductoisomerase (NADP(+)) (340 aa).

Residues 1-182 (MRVYYDRDCD…GGGRSGIIET (182 aa)) form the KARI N-terminal Rossmann domain. Residues 24-27 (YGSQ), R48, S51, S53, and 83-86 (DELQ) contribute to the NADP(+) site. Residue H108 is part of the active site. G134 is an NADP(+) binding site. The KARI C-terminal knotted domain maps to 183-329 (NFREECETDL…KELRGMMPWI (147 aa)). Mg(2+) contacts are provided by D191, E195, E227, and E231. S252 contributes to the substrate binding site.

Belongs to the ketol-acid reductoisomerase family. The cofactor is Mg(2+).

The enzyme catalyses (2R)-2,3-dihydroxy-3-methylbutanoate + NADP(+) = (2S)-2-acetolactate + NADPH + H(+). The catalysed reaction is (2R,3R)-2,3-dihydroxy-3-methylpentanoate + NADP(+) = (S)-2-ethyl-2-hydroxy-3-oxobutanoate + NADPH + H(+). The protein operates within amino-acid biosynthesis; L-isoleucine biosynthesis; L-isoleucine from 2-oxobutanoate: step 2/4. Its pathway is amino-acid biosynthesis; L-valine biosynthesis; L-valine from pyruvate: step 2/4. Functionally, involved in the biosynthesis of branched-chain amino acids (BCAA). Catalyzes an alkyl-migration followed by a ketol-acid reduction of (S)-2-acetolactate (S2AL) to yield (R)-2,3-dihydroxy-isovalerate. In the isomerase reaction, S2AL is rearranged via a Mg-dependent methyl migration to produce 3-hydroxy-3-methyl-2-ketobutyrate (HMKB). In the reductase reaction, this 2-ketoacid undergoes a metal-dependent reduction by NADPH to yield (R)-2,3-dihydroxy-isovalerate. The chain is Ketol-acid reductoisomerase (NADP(+)) from Dinoroseobacter shibae (strain DSM 16493 / NCIMB 14021 / DFL 12).